A 528-amino-acid polypeptide reads, in one-letter code: ATP synthase subunit alpha (528 aa).

An ATP-binding site is contributed by G169–T176.

The protein belongs to the ATPase alpha/beta chains family. As to quaternary structure, F-type ATPases have 2 components, CF(1) - the catalytic core - and CF(0) - the membrane proton channel. CF(1) has five subunits: alpha(3), beta(3), gamma(1), delta(1), epsilon(1). CF(0) has three main subunits: a(1), b(2) and c(9-12). The alpha and beta chains form an alternating ring which encloses part of the gamma chain. CF(1) is attached to CF(0) by a central stalk formed by the gamma and epsilon chains, while a peripheral stalk is formed by the delta and b chains.

The protein resides in the cell membrane. The catalysed reaction is ATP + H2O + 4 H(+)(in) = ADP + phosphate + 5 H(+)(out). In terms of biological role, produces ATP from ADP in the presence of a proton gradient across the membrane. The alpha chain is a regulatory subunit. In Mycoplasmopsis agalactiae (strain NCTC 10123 / CIP 59.7 / PG2) (Mycoplasma agalactiae), this protein is ATP synthase subunit alpha.